We begin with the raw amino-acid sequence, 237 residues long: Maternal B9.10 protein (237 aa).

It belongs to the BTG family.

This Xenopus laevis (African clawed frog) protein is Maternal B9.10 protein.